Consider the following 450-residue polypeptide: Caspase Dronc (450 aa).

Residues 1 to 134 (MQPPELEIGM…RTSRKSADIV (134 aa)) constitute a propeptide that is removed on maturation. The 46-residue stretch at 64–109 (EKDVRVEQHRRLLLKITQRGPTAYNLLINALRNINCLDAAVLLESV) folds into the CARD domain. Positions 114–125 (SRPPFISLNERR) are required for binding Diap1. Active-site residues include H271 and C318. A propeptide spanning residues 321 to 324 (DEYD) is cleaved from the precursor.

The protein belongs to the peptidase C14A family. In terms of assembly, interacts (via residues 114-125) with Diap1 (via BIR 2 domain); binding blocks Dronc-mediated cell death. Can form a stable complex with Drice. Rpr, hid and grim can out-compete Dronc for binding Diap1, therefore removing Diap1-mediated ubiquitination. Interacts (via CARD domain) with Dark (via Dark CARD and WD domains); the interaction stimulates Dark oligomerization to form the apoptosome and brings pairs of Dronc molecules together on the apoptosome to facilitate their dimerization and activation by autocatalytic cleavage. Binding to Dark stimulates apoptosome assembly. After autocatalytic cleavage the Dronc caspase domain dissociates from the apoptosome but the CARD domain remains associated. In terms of processing, ubiquitinated by Diap1, leading to its subsequent degradation. In terms of tissue distribution, ubiquitously expressed in embryos during early stages of development. In late third instar larvae, dramatic up-regulation in salivary glands and midgut before histolysis of these tissues.

The protein localises to the cytoplasm. It carries out the reaction Strict requirement for an Asp residue at position P1 and with a marked preference for His at position P2. It has a preferred cleavage sequence of Leu-Gly-His-Asp-|-Xaa.. With respect to regulation, zymogen activated by autocatalytic cleavage; association with the Dark apoptosome brings multiple molecules together to facilitate their dimerization and activation by autocatalytic cleavage. Functionally, involved in the activation cascade of caspases responsible for apoptosis execution. Effector of steroid-mediated apoptosis during insect metamorphosis. Overexpression promotes programmed cell death. Interaction with Diap1 is required to suppress Dronc-mediated cell death; via Diap1-mediated ubiquitination of Dronc. Rate-limiting caspase in rpr, grim and hid death pathway. Recruited to the Dark apoptosome, an adapter protein complex that mediates activation of the caspase cascade in programmed cell death initiated by the intrinsic apoptosis pathway. Association with the Dark apoptosome stimulates autocatalytic cleavage and activation of Dronc, promoting Dronc-mediated cleavage of downstream effector caspases such as Drice. This Drosophila melanogaster (Fruit fly) protein is Caspase Dronc.